Reading from the N-terminus, the 417-residue chain is Phosphoribosylamine--glycine ligase (417 aa).

The region spanning 108 to 307 (KRIMDEAGVP…LSTLLFAAAT (200 aa)) is the ATP-grasp domain. Residue 134-188 (LDEFGAPYVVKADGLAAGKGVIVTEDRAAALAHAARYLTHGSVLVEEFLDGEEVS) coordinates ATP. Mg(2+) contacts are provided by E277 and N279.

The protein belongs to the GARS family. Requires Mg(2+) as cofactor. Mn(2+) is required as a cofactor.

It catalyses the reaction 5-phospho-beta-D-ribosylamine + glycine + ATP = N(1)-(5-phospho-beta-D-ribosyl)glycinamide + ADP + phosphate + H(+). It functions in the pathway purine metabolism; IMP biosynthesis via de novo pathway; N(1)-(5-phospho-D-ribosyl)glycinamide from 5-phospho-alpha-D-ribose 1-diphosphate: step 2/2. The polypeptide is Phosphoribosylamine--glycine ligase (Leifsonia xyli subsp. xyli (strain CTCB07)).